Consider the following 217-residue polypeptide: Large ribosomal subunit protein uL3 (217 aa).

The segment at 129 to 162 (SRGPMSHGSKNHRAPGSTGAGTTPGRIYPGKRMA) is disordered. Over residues 142 to 153 (APGSTGAGTTPG) the composition is skewed to low complexity.

This sequence belongs to the universal ribosomal protein uL3 family. Part of the 50S ribosomal subunit. Forms a cluster with proteins L14 and L19.

In terms of biological role, one of the primary rRNA binding proteins, it binds directly near the 3'-end of the 23S rRNA, where it nucleates assembly of the 50S subunit. The polypeptide is Large ribosomal subunit protein uL3 (Prochlorococcus marinus (strain MIT 9215)).